Here is a 186-residue protein sequence, read N- to C-terminus: Glutathione peroxidase 7 (186 aa).

A signal peptide spans 1–18 (MVAARAAAWLLLAAAACA). Residue Cys-56 is part of the active site.

Belongs to the glutathione peroxidase family.

It is found in the secreted. The enzyme catalyses 2 glutathione + H2O2 = glutathione disulfide + 2 H2O. The sequence is that of Glutathione peroxidase 7 (GPX7) from Bos taurus (Bovine).